A 588-amino-acid chain; its full sequence is Adenine deaminase (588 aa).

This sequence belongs to the metallo-dependent hydrolases superfamily. Adenine deaminase family. As to quaternary structure, homodimer. Mn(2+) serves as cofactor.

The enzyme catalyses adenine + H2O + H(+) = hypoxanthine + NH4(+). The polypeptide is Adenine deaminase (Escherichia coli O17:K52:H18 (strain UMN026 / ExPEC)).